The sequence spans 184 residues: GTPase RhebL1 (184 aa).

GTP contacts are provided by residues 16–21 (SVGKTS), 32–38 (LEGYDPT), glycine 63, 119–122 (NKAD), and 149–150 (SA). The Effector region motif lies at 35 to 43 (YDPTVENTY). Threonine 38 is a Mg(2+) binding site. Position 181 is a cysteine methyl ester (cysteine 181). Cysteine 181 carries S-farnesyl cysteine lipidation. Positions 182-184 (YLM) are cleaved as a propeptide — removed in mature form.

The protein belongs to the small GTPase superfamily. Rheb family. In terms of assembly, interacts with MTOR.

It is found in the endomembrane system. The protein localises to the cytoplasm. The catalysed reaction is GTP + H2O = GDP + phosphate + H(+). Binds GTP and exhibits intrinsic GTPase activity. May activate NF-kappa-B-mediated gene transcription. Promotes signal transduction through MTOR, activates RPS6KB1, and is a downstream target of the small GTPase-activating proteins TSC1 and TSC2. In Mus musculus (Mouse), this protein is GTPase RhebL1 (Rhebl1).